The primary structure comprises 105 residues: Iron-sulfur cluster assembly protein CyaY (105 aa).

It belongs to the frataxin family.

In terms of biological role, involved in iron-sulfur (Fe-S) cluster assembly. May act as a regulator of Fe-S biogenesis. This is Iron-sulfur cluster assembly protein CyaY from Chromobacterium violaceum (strain ATCC 12472 / DSM 30191 / JCM 1249 / CCUG 213 / NBRC 12614 / NCIMB 9131 / NCTC 9757 / MK).